Here is a 563-residue protein sequence, read N- to C-terminus: Probable terpene synthase 4 (563 aa).

Mg(2+) is bound by residues aspartate 316, aspartate 320, and glutamate 469. Residues 316-320 (DDIFD) carry the DDXXD motif motif.

It belongs to the terpene synthase family. Mg(2+) serves as cofactor.

In terms of biological role, probable sesquiterpene synthase. The polypeptide is Probable terpene synthase 4 (TPS4) (Ricinus communis (Castor bean)).